The sequence spans 460 residues: U-box domain-containing protein 9 (460 aa).

The region spanning 73–147 (SCPEEFRCPL…SKWCKKNGLE (75 aa)) is the U-box domain. ARM repeat units follow at residues 201 to 244 (TEFR…NISI), 248 to 287 (SNKKLVCENPNVIPLLIDALRRGTVATRSNAAAAIFTLSA), and 289 to 328 (DSNKVLIGKSGILKPLIDLLEEGNPLAIKDVAAAIFTLCI).

Binds to SD11, SD16, SD17, SD18, SD113, SD129 and SD25. In terms of processing, phosphorylated by SD1-6 and SD1-7.

It localises to the nucleus. Its subcellular location is the cell membrane. The enzyme catalyses S-ubiquitinyl-[E2 ubiquitin-conjugating enzyme]-L-cysteine + [acceptor protein]-L-lysine = [E2 ubiquitin-conjugating enzyme]-L-cysteine + N(6)-ubiquitinyl-[acceptor protein]-L-lysine.. It participates in protein modification; protein ubiquitination. Functionally, functions as an E3 ubiquitin ligase. May be involved in the abscisic acid-mediated signaling pathway, at least during germination. This Arabidopsis thaliana (Mouse-ear cress) protein is U-box domain-containing protein 9 (PUB9).